The primary structure comprises 438 residues: Serine hydroxymethyltransferase (438 aa).

(6S)-5,6,7,8-tetrahydrofolate contacts are provided by residues Leu-133 and 137–139 (GHL). Lys-242 is modified (N6-(pyridoxal phosphate)lysine).

This sequence belongs to the SHMT family. Homodimer. Pyridoxal 5'-phosphate serves as cofactor.

The protein resides in the cytoplasm. The enzyme catalyses (6R)-5,10-methylene-5,6,7,8-tetrahydrofolate + glycine + H2O = (6S)-5,6,7,8-tetrahydrofolate + L-serine. It functions in the pathway one-carbon metabolism; tetrahydrofolate interconversion. Its pathway is amino-acid biosynthesis; glycine biosynthesis; glycine from L-serine: step 1/1. Its function is as follows. Catalyzes the reversible interconversion of serine and glycine with tetrahydrofolate (THF) serving as the one-carbon carrier. This reaction serves as the major source of one-carbon groups required for the biosynthesis of purines, thymidylate, methionine, and other important biomolecules. Also exhibits THF-independent aldolase activity toward beta-hydroxyamino acids, producing glycine and aldehydes, via a retro-aldol mechanism. This Brucella ovis (strain ATCC 25840 / 63/290 / NCTC 10512) protein is Serine hydroxymethyltransferase.